The primary structure comprises 361 residues: Probable cinnamyl alcohol dehydrogenase (361 aa).

Cys48 is a Zn(2+) binding site. Residue Thr50 participates in NADP(+) binding. Zn(2+) is bound by residues His70, Glu71, Cys101, Cys104, Cys107, Cys115, and Cys164. NADP(+)-binding positions include Thr168, 189–194 (GLGGVG), 212–217 (SSSDKK), Thr252, Gly276, and 299–301 (SFI).

Belongs to the zinc-containing alcohol dehydrogenase family. As to quaternary structure, homodimer. It depends on Zn(2+) as a cofactor.

It carries out the reaction (E)-cinnamyl alcohol + NADP(+) = (E)-cinnamaldehyde + NADPH + H(+). The enzyme catalyses (E)-coniferol + NADP(+) = (E)-coniferaldehyde + NADPH + H(+). It catalyses the reaction (E)-sinapyl alcohol + NADP(+) = (E)-sinapaldehyde + NADPH + H(+). The catalysed reaction is (E)-4-coumaroyl alcohol + NADP(+) = (E)-4-coumaraldehyde + NADPH + H(+). It carries out the reaction (E)-caffeyl alcohol + NADP(+) = (E)-caffeyl aldehyde + NADPH + H(+). It participates in aromatic compound metabolism; phenylpropanoid biosynthesis. In terms of biological role, involved in lignin biosynthesis. Catalyzes the final step specific for the production of lignin monomers. Catalyzes the NADPH-dependent reduction of coniferaldehyde, 5-hydroxyconiferaldehyde, sinapaldehyde, 4-coumaraldehyde and caffeyl aldehyde to their respective alcohols. This chain is Probable cinnamyl alcohol dehydrogenase, found in Lolium perenne (Perennial ryegrass).